We begin with the raw amino-acid sequence, 506 residues long: Gallate 1-beta-glucosyltransferase 84A23 (506 aa).

Catalysis depends on histidine 20, which acts as the Proton acceptor. Histidine 20 lines the an anthocyanidin pocket. UDP-alpha-D-glucose-binding residues include glutamine 345, histidine 360, tryptophan 363, asparagine 364, serine 365, and glutamate 368. Residue glycine 383 coordinates an anthocyanidin. Residues aspartate 384 and glutamine 385 each contribute to the UDP-alpha-D-glucose site.

This sequence belongs to the UDP-glycosyltransferase family. In terms of tissue distribution, expressed in roots of the seedlings.

It is found in the cytoplasm. The catalysed reaction is 3,4,5-trihydroxybenzoate + UDP-alpha-D-glucose = 1-O-galloyl-beta-D-glucose + UDP. It carries out the reaction 3,4-dihydroxybenzoate + UDP-alpha-D-glucose = 1-O-(3,4-dihydroxy-benzoyl)-beta-D-glucose + UDP. The enzyme catalyses 4-hydroxybenzoate + UDP-alpha-D-glucose = 4-(beta-D-glucosyloxy)benzoate + UDP + H(+). It catalyses the reaction (E)-cinnamate + UDP-alpha-D-glucose = 1-O-(trans-cinnamoyl)-beta-D-glucose + UDP. The catalysed reaction is (E)-sinapate + UDP-alpha-D-glucose = 1-O-(trans-sinapoyl)-beta-D-glucose + UDP. It carries out the reaction (E)-4-coumarate + UDP-alpha-D-glucose = 1-O-(trans-4-coumaroyl)-beta-D-glucose + UDP. The enzyme catalyses (E)-caffeate + UDP-alpha-D-glucose = 1-O-[(E)-caffeoyl]-beta-D-glucose + UDP. It catalyses the reaction (E)-ferulate + UDP-alpha-D-glucose = 1-O-[(E)-feruloyl]-beta-D-glucose + UDP. The catalysed reaction is genistein + UDP-alpha-D-glucose = genistein 7-O-beta-D-glucoside + UDP + H(+). It carries out the reaction apigenin + UDP-alpha-D-glucose = apigenin 7-O-beta-D-glucoside + UDP + H(+). The enzyme catalyses luteolin + UDP-alpha-D-glucose = luteolin 7-O-beta-D-glucoside + UDP + H(+). Its function is as follows. Glucosyltransferase that catalyzes the formation of 1-O-beta-D-glucose esters with hydroxybenzoic acids and cinnamic acid including its derivatives as preferred glucosyl acceptors. Has significant activity with gallic acid (3,4,5-trihydroxybenzoic acid), 3,4-dihydroxybenzoic acid, 4-hydroxybenzoic acid, cinnamic acid, sinapic acid, coumaric acid, caffeic acid and ferulic acid in vitro. Gallic acid is the predicted native substrate of the enzyme, which thus catalyzes the formation of 1-O-galloyl-beta-D-glucose, the first committed step of hydrolyzable tannins (HTs) biosynthesis, with punicalagin isomers being the major HTs of pomegranate. Catalyzes the formation of flavonoid glucosides with genistein, apigenin and luteolin in vitro. Has low activity with benzoic acid, 2-hydroxybenzoic acid, 3-hydroxybenzoic acid, 2,4-dihydroxybenzoic acid, naringenin and quercetin. No activity with catechol, resveratrol, chlorogenic acid, catechin and epicatechin (building blocks of proanthocyanidins) or cyanidin, delphinidin and pelargonidin (the three anthocyanidins). The sequence is that of Gallate 1-beta-glucosyltransferase 84A23 from Punica granatum (Pomegranate).